A 450-amino-acid polypeptide reads, in one-letter code: MTPISQRISQKSPKLRETKQIQMTTTDKSAGIVTDSEAGPETSLLLNPHEGSTKKAPSDSYHFAYIIYFTLGVGFLLPWNAFITAVDYFSYLYPSTAVDRIFAVIYMLVALVCLFVIVVFYAHKSLASFRINLGLLLFVIALLVVPVLDLVYVKGQVGLYAGFDVTSAAVALSGLGDALMQGGLIGVAGEMPERYMQAVVAGTAGSGVLVSLLRILTKAVYPQDPDGLRKSANLYFAVGIVVMVICAVFYNVAHKLPVIKFHEERKNEELIREKSEEKGSLTGLAWRTTLWDIVTKVKSHGFGIVLLYMVTLSIFPGYITEDVHSELLTDWYPILLIAAYNVFDLVGKCLTAVFMLEDEKIAVGGSIARLLFYPLFWGCLHGPMFLRTEIPVTILTCLLGLTNGYLTSVLMILAPKSVPLRHSETAGIVTVMFLVVGLASGSVIAWFWVI.

Helical transmembrane passes span 63–83 (FAYIIYFTLGVGFLLPWNAFI), 101–121 (IFAVIYMLVALVCLFVIVVFY), 133–153 (LGLLLFVIALLVVPVLDLVYV), 168–188 (AAVALSGLGDALMQGGLIGVA), 196–216 (MQAVVAGTAGSGVLVSLLRIL), 234–254 (LYFAVGIVVMVICAVFYNVAH), 300–320 (HGFGIVLLYMVTLSIFPGYIT), 334–354 (ILLIAAYNVFDLVGKCLTAVF), 361–381 (IAVGGSIARLLFYPLFWGCLH), 394–414 (ILTCLLGLTNGYLTSVLMILA), and 430–450 (TVMFLVVGLASGSVIAWFWVI).

This sequence belongs to the SLC29A/ENT transporter (TC 2.A.57) family. In young seedlings, expressed in root elongation zone, root cortex, root-hair, at the transition to the shoot and cotyledons. Expressed in hydathodes of fully developed leaves and pollen.

It is found in the vacuole membrane. Its function is as follows. Nucleoside transporter involved in adenosine transport and required for nucleotide metabolism which influences growth and pollen germination. Has high affinity for adenosine when expressed in a heterologous system (yeast). The polypeptide is Equilibrative nucleotide transporter 1 (ENT1) (Arabidopsis thaliana (Mouse-ear cress)).